Reading from the N-terminus, the 88-residue chain is Small ribosomal subunit protein bS20 (88 aa).

The disordered stretch occupies residues 1–36 (MANTSSAKKATRKIARRTAVNKSRRTQMRGSVRTVE).

This sequence belongs to the bacterial ribosomal protein bS20 family.

Its function is as follows. Binds directly to 16S ribosomal RNA. The protein is Small ribosomal subunit protein bS20 of Rhodopseudomonas palustris (strain HaA2).